Consider the following 434-residue polypeptide: UDP-N-acetylglucosamine 1-carboxyvinyltransferase 1 (434 aa).

22 to 23 (KN) serves as a coordination point for phosphoenolpyruvate. Residue Arg-93 participates in UDP-N-acetyl-alpha-D-glucosamine binding. The Proton donor role is filled by Cys-117. Cys-117 bears the 2-(S-cysteinyl)pyruvic acid O-phosphothioketal mark. UDP-N-acetyl-alpha-D-glucosamine is bound by residues 122-126 (RPIDQ), Asp-306, and Val-328.

The protein belongs to the EPSP synthase family. MurA subfamily.

The protein localises to the cytoplasm. It catalyses the reaction phosphoenolpyruvate + UDP-N-acetyl-alpha-D-glucosamine = UDP-N-acetyl-3-O-(1-carboxyvinyl)-alpha-D-glucosamine + phosphate. It functions in the pathway cell wall biogenesis; peptidoglycan biosynthesis. In terms of biological role, cell wall formation. Adds enolpyruvyl to UDP-N-acetylglucosamine. The chain is UDP-N-acetylglucosamine 1-carboxyvinyltransferase 1 from Bacillus cereus (strain ATCC 10987 / NRS 248).